Consider the following 462-residue polypeptide: uncharacterized protein (462 aa).

Residues 12-70 enclose the TRAM domain; it reads MLKKNDIIQVAISDLSHEGAGVAKHDGFVFFVDNALPEEVIDMRVLKVNKNSGFGKVEA. Gln-294, Tyr-323, Glu-344, and Asp-392 together coordinate S-adenosyl-L-methionine. Cys-419 (nucleophile) is an active-site residue.

It belongs to the class I-like SAM-binding methyltransferase superfamily. RNA M5U methyltransferase family.

This is an uncharacterized protein from Streptococcus pyogenes serotype M18 (strain MGAS8232).